Here is a 257-residue protein sequence, read N- to C-terminus: Small ribosomal subunit protein uS2 (257 aa).

The segment at 237 to 257 is disordered; that stretch reads MDEADGSEAEPEDPAAPESAE. Residues 240 to 257 show a composition bias toward acidic residues; it reads ADGSEAEPEDPAAPESAE.

The protein belongs to the universal ribosomal protein uS2 family.

The protein is Small ribosomal subunit protein uS2 of Chlorobium phaeovibrioides (strain DSM 265 / 1930) (Prosthecochloris vibrioformis (strain DSM 265)).